The sequence spans 273 residues: Dermonecrotic toxin LarSicTox-alphaIB1aiv (273 aa).

His5 is an active-site residue. Positions 25 and 27 each coordinate Mg(2+). The active-site Nucleophile is the His41. 2 disulfides stabilise this stretch: Cys45–Cys51 and Cys47–Cys190. Asp85 lines the Mg(2+) pocket. A glycan (N-linked (GlcNAc...) asparagine) is linked at Asn250.

This sequence belongs to the arthropod phospholipase D family. Class II subfamily. Requires Mg(2+) as cofactor. In terms of tissue distribution, expressed by the venom gland.

It localises to the secreted. The catalysed reaction is an N-(acyl)-sphingosylphosphocholine = an N-(acyl)-sphingosyl-1,3-cyclic phosphate + choline. It carries out the reaction an N-(acyl)-sphingosylphosphoethanolamine = an N-(acyl)-sphingosyl-1,3-cyclic phosphate + ethanolamine. It catalyses the reaction a 1-acyl-sn-glycero-3-phosphocholine = a 1-acyl-sn-glycero-2,3-cyclic phosphate + choline. The enzyme catalyses a 1-acyl-sn-glycero-3-phosphoethanolamine = a 1-acyl-sn-glycero-2,3-cyclic phosphate + ethanolamine. In terms of biological role, dermonecrotic toxins cleave the phosphodiester linkage between the phosphate and headgroup of certain phospholipids (sphingolipid and lysolipid substrates), forming an alcohol (often choline) and a cyclic phosphate. This toxin acts on sphingomyelin (SM). It may also act on ceramide phosphoethanolamine (CPE), lysophosphatidylcholine (LPC) and lysophosphatidylethanolamine (LPE), but not on lysophosphatidylserine (LPS), and lysophosphatidylglycerol (LPG). It acts by transphosphatidylation, releasing exclusively cyclic phosphate products as second products. Induces dermonecrosis, hemolysis, increased vascular permeability, edema, inflammatory response, and platelet aggregation. The sequence is that of Dermonecrotic toxin LarSicTox-alphaIB1aiv from Loxosceles arizonica (Arizona brown spider).